The chain runs to 107 residues: Nucleoid-associated protein Pnuc_0701 (107 aa).

The protein belongs to the YbaB/EbfC family. In terms of assembly, homodimer.

It is found in the cytoplasm. The protein resides in the nucleoid. In terms of biological role, binds to DNA and alters its conformation. May be involved in regulation of gene expression, nucleoid organization and DNA protection. The sequence is that of Nucleoid-associated protein Pnuc_0701 from Polynucleobacter asymbioticus (strain DSM 18221 / CIP 109841 / QLW-P1DMWA-1) (Polynucleobacter necessarius subsp. asymbioticus).